The following is a 517-amino-acid chain: Sugar transport protein MST1 (517 aa).

Topologically, residues 1–25 (MAGGVIVANDGDGSAVDHGGRLTFS) are cytoplasmic. The helical transmembrane segment at 26–46 (VVITCLVAASGGLIFGYDVGI) threads the bilayer. Topologically, residues 47-83 (SGGVSTMEPFLRRFFPGVVRRMAEARPGNEYCVYDSQ) are extracellular. The chain crosses the membrane as a helical span at residues 84–104 (ALTAFTSSLYVAGLVASLVAS). At 105-120 (RVTRAMGRQAVMVMGG) the chain is on the cytoplasmic side. Residues 121–141 (ALFFAGGAVTGFAVNIAMLIV) traverse the membrane as a helical segment. The Extracellular portion of the chain corresponds to 142–143 (GR). Residues 144 to 164 (MLLGFGVGFTNQAAPLFLAEM) traverse the membrane as a helical segment. Residues 165–170 (APTRWR) are Cytoplasmic-facing. The helical transmembrane segment at 171-191 (GSLTAGFQFFLAVGVVIATVT) threads the bilayer. Residues 192–203 (NYFASRVPWGWR) are Extracellular-facing. Residues 204-224 (LSLGLAGAPAVVIFLGALFLT) traverse the membrane as a helical segment. The Cytoplasmic portion of the chain corresponds to 225-288 (DTPSSLVMRG…AARREYRPYL (64 aa)). The chain crosses the membrane as a helical span at residues 289-309 (VFAVAMPMFFQLTGVIVISFF). Residues 310-325 (SPLVFRTVGFGSNAAL) lie on the Extracellular side of the membrane. Residues 326-346 (MGNVILGAVNLVCLMLSTLVI) form a helical membrane-spanning segment. Residues 347-352 (DRYGRK) lie on the Cytoplasmic side of the membrane. Residues 353-373 (VLFMVGGAIMIIAQVGVAWIM) traverse the membrane as a helical segment. Topologically, residues 374–389 (GAQVGKNGSEAMARPY) are extracellular. The chain crosses the membrane as a helical span at residues 390–410 (AVAVVAFTCLHTAGFGWSWGP). Topologically, residues 411–430 (LGWVIPGEIFPVDIRSAGQA) are cytoplasmic. A helical membrane pass occupies residues 431–451 (MNVSIGLGLTFVQTQSFLAML). The Extracellular segment spans residues 452–456 (CRFRY). The helical transmembrane segment at 457–477 (GTFAYYAAWVAVMTVFIAVFL) threads the bilayer. Topologically, residues 478–517 (PETKGVPLESMATVWARHWYWKRFAREQPKTSADEPTGTY) are cytoplasmic.

It belongs to the major facilitator superfamily. Sugar transporter (TC 2.A.1.1) family.

Its subcellular location is the membrane. In terms of biological role, mediates active uptake of hexoses by sugar:proton symport. This chain is Sugar transport protein MST1, found in Oryza sativa subsp. japonica (Rice).